Consider the following 237-residue polypeptide: Ribonuclease 3 (237 aa).

An RNase III domain is found at 7 to 135; that stretch reads IKEVEAKLKF…ILGAVYLDGG (129 aa). Glu48 lines the Mg(2+) pocket. The active site involves Asp52. Residues Asn121 and Glu124 each coordinate Mg(2+). Glu124 is a catalytic residue. One can recognise a DRBM domain in the interval 160–229; the sequence is NPKNRLQQLT…AQEALDANDY (70 aa).

This sequence belongs to the ribonuclease III family. In terms of assembly, homodimer. The cofactor is Mg(2+).

The protein localises to the cytoplasm. It carries out the reaction Endonucleolytic cleavage to 5'-phosphomonoester.. In terms of biological role, digests double-stranded RNA. Involved in the processing of primary rRNA transcript to yield the immediate precursors to the large and small rRNAs (23S and 16S). Processes some mRNAs, and tRNAs when they are encoded in the rRNA operon. Processes pre-crRNA and tracrRNA of type II CRISPR loci if present in the organism. The chain is Ribonuclease 3 from Chlamydia felis (strain Fe/C-56) (Chlamydophila felis).